Here is a 1577-residue protein sequence, read N- to C-terminus: Hemolysin (1577 aa).

The first 29 residues, 1-29 (MKSKNFKLSPSGRLAASLAIIFVSLNAYG), serve as a signal peptide directing secretion. Positions 437-446 (EKESRSENGN) are enriched in basic and acidic residues. Disordered regions lie at residues 437–467 (EKES…QTET), 1081–1103 (TDTH…GTTP), 1169–1188 (QSAS…GVQA), and 1213–1232 (KQDE…SGNL). 3 stretches are compositionally biased toward polar residues: residues 454–467 (LESG…QTET), 1081–1095 (TDTH…NGSA), and 1169–1184 (QSAS…NLSG).

The protein localises to the cell outer membrane. Bacterial hemolysins are exotoxins that attack blood cell membranes and cause cell rupture by mechanisms not clearly defined. Its function is as follows. Cell-bound hemolysin, which releases heme-iron from erythrocytes by interaction with the erythrocyte membrane. HpmA requires HpmB function. This chain is Hemolysin (hpmA), found in Proteus mirabilis.